The chain runs to 307 residues: Exosome complex component RRP45A (307 aa).

Belongs to the RNase PH family. In terms of tissue distribution, expressed in roots, leaves, stems, buds and siliques.

Its subcellular location is the cytoplasm. The protein resides in the nucleus. Its function is as follows. Probable 3'-&gt;5' exoribonuclease involved in the regulation of cuticular wax biosynthesis. Can perform exosomal functions and partially complement the yeast rrp45 null mutant. This Arabidopsis thaliana (Mouse-ear cress) protein is Exosome complex component RRP45A.